We begin with the raw amino-acid sequence, 245 residues long: MNRWQRSVVEIQTRKRQVNECERAQVALSKVTACFQQMSTSLGSNVDGSFLREEMEETRTVAHKICSGLHRRLLSLLMEIDQGQEDKEQVERLWVIFLSSLENFQQDLKKVKVLQEIFPLTQRKDRQALVITGLAGGTSEVAARAAMVQTPWLSVEVTVSPDLKTHIEEIDVLLEEMLQRVNVPLWSVEPTQEAWVEGSSTPGVGQEEDESLEEMMEVEVVSQNKTSGCCHHHNCKVGCLLCLLS.

Residues 71-92 (RRLLSLLMEIDQGQEDKEQVER) are a coiled coil.

It belongs to the RGS7BP/RGS9BP family.

In terms of biological role, regulator of G protein-coupled receptor (GPCR) signaling. Probably acts by regulating the activity of some 'R7' family protein (RGS6, RGS7, RGS9 and/or RGS11). This Danio rerio (Zebrafish) protein is Regulator of G-protein signaling 9-binding protein (rgs9bp).